A 637-amino-acid chain; its full sequence is ATP-dependent zinc metalloprotease FtsH (637 aa).

Topologically, residues M1 to R6 are cytoplasmic. The helical transmembrane segment at S7–S27 threads the bilayer. The Periplasmic segment spans residues D28–T103. Residues F104–F124 traverse the membrane as a helical segment. The Cytoplasmic portion of the chain corresponds to M125–S637. ATP is bound at residue G195–T202. H417 provides a ligand contact to Zn(2+). Residue E418 is part of the active site. Zn(2+) contacts are provided by H421 and D495. The disordered stretch occupies residues E603–S637. Over residues K615 to S637 the composition is skewed to basic and acidic residues.

It in the central section; belongs to the AAA ATPase family. In the C-terminal section; belongs to the peptidase M41 family. In terms of assembly, homohexamer. The cofactor is Zn(2+).

Its subcellular location is the cell inner membrane. In terms of biological role, acts as a processive, ATP-dependent zinc metallopeptidase for both cytoplasmic and membrane proteins. Plays a role in the quality control of integral membrane proteins. This is ATP-dependent zinc metalloprotease FtsH from Rickettsia conorii (strain ATCC VR-613 / Malish 7).